We begin with the raw amino-acid sequence, 438 residues long: Sphingomyelinase phosphodiesterase D (438 aa).

The signal sequence occupies residues M1–A17. Zn(2+) contacts are provided by D27 and H29. N-linked (GlcNAc...) asparagine glycosylation is present at N40. Positions 111 and 148 each coordinate Zn(2+). N-linked (GlcNAc...) asparagine glycosylation occurs at N160. Residue H247 coordinates Zn(2+). N271 carries an N-linked (GlcNAc...) asparagine glycan. H287 and H289 together coordinate Zn(2+). N338 and N359 each carry an N-linked (GlcNAc...) asparagine glycan.

This sequence belongs to the acid sphingomyelinase family. Requires Zn(2+) as cofactor.

Its subcellular location is the secreted. The polypeptide is Sphingomyelinase phosphodiesterase D (sgmD) (Dictyostelium discoideum (Social amoeba)).